Here is a 422-residue protein sequence, read N- to C-terminus: Cell division protein DivIB (422 aa).

Basic and acidic residues-rich tracts occupy residues 1-23 (MVDW…KQEE) and 62-75 (EEAK…DQEQ). A disordered region spans residues 1 to 77 (MVDWDKEAQR…DFAKDQEQKH (77 aa)). Over 1–109 (MVDWDKEAQR…LQLKSVSWSR (109 aa)) the chain is Cytoplasmic. A helical membrane pass occupies residues 110–130 (LILAAAFLFMIIFSAFWLSPL). The 72-residue stretch at 131-202 (NRIATIEVSG…RTVEVNVQEF (72 aa)) folds into the POTRA domain. At 131 to 422 (NRIATIEVSG…TVTQTRSSNS (292 aa)) the chain is on the extracellular side. The interval 329–422 (NPLNDPFASP…TVTQTRSSNS (94 aa)) is disordered. The segment covering 338 to 379 (PEEKASYQEKVDQAKEKSKEKQAKADKHSSESKLGDKPKPRG) has biased composition (basic and acidic residues). A compositionally biased stretch (low complexity) spans 389–422 (TSSQRQTSSQSSPRPGTNSSQQSSTVTQTRSSNS).

This sequence belongs to the FtsQ/DivIB family. DivIB subfamily.

The protein resides in the cell membrane. Its function is as follows. Cell division protein that may be involved in stabilizing or promoting the assembly of the division complex. The polypeptide is Cell division protein DivIB (Aerococcus urinae (strain CCUG 59500 / ACS-120-V-Col10a)).